We begin with the raw amino-acid sequence, 205 residues long: MSVFAVVPVKELRGAKSRLGAVLDPVGRAGLTLHMLRRVVPALRGAGLRRVLVVSPDPAVLEEARLLGAAGLRQEGFGLNAALEEGRRRALEEGAGALLALPADLPLIEPADVAALLEVAGEGPCAVISPDDARSGTNALLLRPPGALPFSFGPGSFGVHLQAALRRGVRVRVCERPNVAFDLDSPEDLARLEASGGVQYRPRRA.

Phosphoenolpyruvate is bound by residues Thr137, Gly153, and Ser156.

The protein belongs to the CofC family.

It catalyses the reaction phosphoenolpyruvate + GTP + H(+) = enolpyruvoyl-2-diphospho-5'-guanosine + diphosphate. The protein operates within cofactor biosynthesis; coenzyme F420 biosynthesis. Its function is as follows. Guanylyltransferase that catalyzes the activation of phosphoenolpyruvate (PEP) as enolpyruvoyl-2-diphospho-5'-guanosine, via the condensation of PEP with GTP. It is involved in the biosynthesis of coenzyme F420, a hydride carrier cofactor. This is Phosphoenolpyruvate guanylyltransferase from Rubrobacter xylanophilus (strain DSM 9941 / JCM 11954 / NBRC 16129 / PRD-1).